Here is a 145-residue protein sequence, read N- to C-terminus: Basic phospholipase A2 cPm05 (145 aa).

Residues 1-21 (MYPAHLLVLLAVCISLLGASA) form the signal peptide. Residues 22–27 (IPPLPL) constitute a propeptide that is removed on maturation. Cystine bridges form between C38–C98, C54–C144, C56–C72, C71–C125, C78–C118, C87–C111, and C105–C116. Ca(2+) is bound by residues Y55, G57, and G59. H75 is a catalytic residue. D76 serves as a coordination point for Ca(2+). D119 is a catalytic residue.

This sequence belongs to the phospholipase A2 family. Group I subfamily. D49 sub-subfamily. Requires Ca(2+) as cofactor. In terms of tissue distribution, expressed by the venom gland.

It is found in the secreted. The enzyme catalyses a 1,2-diacyl-sn-glycero-3-phosphocholine + H2O = a 1-acyl-sn-glycero-3-phosphocholine + a fatty acid + H(+). PLA2 catalyzes the calcium-dependent hydrolysis of the 2-acyl groups in 3-sn-phosphoglycerides. In Laticauda semifasciata (Black-banded sea krait), this protein is Basic phospholipase A2 cPm05.